The sequence spans 112 residues: Large ribosomal subunit protein eL30 (112 aa).

It belongs to the eukaryotic ribosomal protein eL30 family.

The sequence is that of Large ribosomal subunit protein eL30 (RPL30) from Euphorbia esula (Leafy spurge).